A 426-amino-acid polypeptide reads, in one-letter code: Adenylosuccinate synthetase (426 aa).

GTP contacts are provided by residues 12 to 18 (GDEGKGK) and 40 to 42 (GHT). Catalysis depends on Asp13, which acts as the Proton acceptor. Mg(2+) contacts are provided by Asp13 and Gly40. IMP-binding positions include 13-16 (DEGK), 38-41 (NAGH), Thr130, Arg144, Gln224, Thr239, and Arg303. His41 serves as the catalytic Proton donor. 299 to 305 (TVTNRVR) serves as a coordination point for substrate. GTP contacts are provided by residues Arg305, 331 to 333 (KLD), and 413 to 415 (STG).

This sequence belongs to the adenylosuccinate synthetase family. As to quaternary structure, homodimer. The cofactor is Mg(2+).

The protein localises to the cytoplasm. The enzyme catalyses IMP + L-aspartate + GTP = N(6)-(1,2-dicarboxyethyl)-AMP + GDP + phosphate + 2 H(+). It participates in purine metabolism; AMP biosynthesis via de novo pathway; AMP from IMP: step 1/2. Its function is as follows. Plays an important role in the de novo pathway of purine nucleotide biosynthesis. Catalyzes the first committed step in the biosynthesis of AMP from IMP. The protein is Adenylosuccinate synthetase of Anaplasma marginale (strain St. Maries).